Consider the following 253-residue polypeptide: Sulfate transporter CysZ (253 aa).

A run of 4 helical transmembrane segments spans residues 31 to 51 (FVILPLLVNIVLMGGAFWWLF), 72 to 92 (LSYLLWPIAVISVLLVFGYFF), 151 to 171 (IVLLILYFIPGIGQTIAPVLW), and 222 to 242 (IPVLNLFIMPVAVCGATAMWV).

This sequence belongs to the CysZ family.

The protein localises to the cell inner membrane. In terms of biological role, possibly involved in sulfate transport. High affinity, high specificity proton-dependent sulfate transporter, which mediates sulfate uptake. Provides the sulfur source for the cysteine synthesis pathway. The chain is Sulfate transporter CysZ from Salmonella typhimurium (strain LT2 / SGSC1412 / ATCC 700720).